Here is a 314-residue protein sequence, read N- to C-terminus: MSSSFKFNYNMGDSRILVVINQRCLALPSMMSADGTCCNGDENRVIDTFSKLGFQDFVYRNMTTADLKDIVTLLTRHNHRTYSCVVVVILTDGAAVGEIKTADGSYKLRDFMTLFDVDKLRDKPKMFVVQTNRGAKIRRNHCKHASCQCLMYSSSERGGLRRIYSVIGWLCKVFGRSSSSPQFASQQLACLNYTLPVRETIVIYSYVDAFVLYGDTDVGSPVIYELCTALDKFGKSCNILTAITMMQHKVAKYVPAALPVVHMNCTRLMHYGDAPNDVTPSKATITTMIDGCSVILEEEGELSDDDGELRTASK.

This sequence belongs to the peptidase C14A family.

Its function is as follows. May be involved in viral replication. This Heliothis virescens ascovirus 3e (HvAV-3e) protein is Caspase-like protein.